Consider the following 1384-residue polypeptide: DNA-directed RNA polymerase subunit beta (1384 aa).

The protein belongs to the RNA polymerase beta chain family. As to quaternary structure, the RNAP catalytic core consists of 2 alpha, 1 beta, 1 beta' and 1 omega subunit. When a sigma factor is associated with the core the holoenzyme is formed, which can initiate transcription.

The catalysed reaction is RNA(n) + a ribonucleoside 5'-triphosphate = RNA(n+1) + diphosphate. Its function is as follows. DNA-dependent RNA polymerase catalyzes the transcription of DNA into RNA using the four ribonucleoside triphosphates as substrates. The polypeptide is DNA-directed RNA polymerase subunit beta (Xylella fastidiosa (strain M23)).